A 235-amino-acid chain; its full sequence is Uridylate kinase (235 aa).

8–11 (KFSG) lines the ATP pocket. The interval 16-21 (GKEGYG) is involved in allosteric activation by GTP. Residue Gly-50 participates in UMP binding. ATP contacts are provided by Gly-51 and Arg-55. UMP contacts are provided by residues Asp-71 and 132-139 (TGNPYFTT). ATP contacts are provided by Thr-159, Tyr-165, and Asp-168.

It belongs to the UMP kinase family. Homohexamer.

Its subcellular location is the cytoplasm. It carries out the reaction UMP + ATP = UDP + ADP. It functions in the pathway pyrimidine metabolism; CTP biosynthesis via de novo pathway; UDP from UMP (UMPK route): step 1/1. Allosterically activated by GTP. Inhibited by UTP. Catalyzes the reversible phosphorylation of UMP to UDP. The protein is Uridylate kinase of Sulfurovum sp. (strain NBC37-1).